The sequence spans 1434 residues: DNA-directed RNA polymerase subunit beta' (1434 aa).

Residues Cys70, Cys72, Cys85, and Cys88 each coordinate Zn(2+). 3 residues coordinate Mg(2+): Asp460, Asp462, and Asp464. Residues Cys840, Cys914, Cys921, and Cys924 each contribute to the Zn(2+) site.

Belongs to the RNA polymerase beta' chain family. The RNAP catalytic core consists of 2 alpha, 1 beta, 1 beta' and 1 omega subunit. When a sigma factor is associated with the core the holoenzyme is formed, which can initiate transcription. Mg(2+) serves as cofactor. Zn(2+) is required as a cofactor.

The catalysed reaction is RNA(n) + a ribonucleoside 5'-triphosphate = RNA(n+1) + diphosphate. In terms of biological role, DNA-dependent RNA polymerase catalyzes the transcription of DNA into RNA using the four ribonucleoside triphosphates as substrates. This is DNA-directed RNA polymerase subunit beta' from Tolumonas auensis (strain DSM 9187 / NBRC 110442 / TA 4).